The primary structure comprises 474 residues: ATP synthase subunit beta 1 (474 aa).

157–164 (GGAGVGKT) contacts ATP.

Belongs to the ATPase alpha/beta chains family. F-type ATPases have 2 components, CF(1) - the catalytic core - and CF(0) - the membrane proton channel. CF(1) has five subunits: alpha(3), beta(3), gamma(1), delta(1), epsilon(1). CF(0) has three main subunits: a(1), b(2) and c(9-12). The alpha and beta chains form an alternating ring which encloses part of the gamma chain. CF(1) is attached to CF(0) by a central stalk formed by the gamma and epsilon chains, while a peripheral stalk is formed by the delta and b chains.

Its subcellular location is the cell inner membrane. It catalyses the reaction ATP + H2O + 4 H(+)(in) = ADP + phosphate + 5 H(+)(out). Its function is as follows. Produces ATP from ADP in the presence of a proton gradient across the membrane. The catalytic sites are hosted primarily by the beta subunits. The chain is ATP synthase subunit beta 1 from Albidiferax ferrireducens (strain ATCC BAA-621 / DSM 15236 / T118) (Rhodoferax ferrireducens).